Here is a 544-residue protein sequence, read N- to C-terminus: Chaperonin GroEL 1 (544 aa).

ATP contacts are provided by residues 29-32 (TLGP), 86-90 (DGTTT), Gly-413, 479-481 (NAA), and Asp-495.

The protein belongs to the chaperonin (HSP60) family. As to quaternary structure, forms a cylinder of 14 subunits composed of two heptameric rings stacked back-to-back. Interacts with the co-chaperonin GroES.

It localises to the cytoplasm. The catalysed reaction is ATP + H2O + a folded polypeptide = ADP + phosphate + an unfolded polypeptide.. Its function is as follows. Together with its co-chaperonin GroES, plays an essential role in assisting protein folding. The GroEL-GroES system forms a nano-cage that allows encapsulation of the non-native substrate proteins and provides a physical environment optimized to promote and accelerate protein folding. The sequence is that of Chaperonin GroEL 1 from Synechococcus sp. (strain CC9902).